We begin with the raw amino-acid sequence, 220 residues long: UPF0319 protein YccT (220 aa).

The first 20 residues, 1-20 (MKTGIVTTLIALCLPVSVFA), serve as a signal peptide directing secretion.

Belongs to the UPF0319 family.

This is UPF0319 protein YccT from Escherichia coli (strain 55989 / EAEC).